We begin with the raw amino-acid sequence, 138 residues long: Large ribosomal subunit protein uL16 (138 aa).

Over residues 1–16 (MLIPRRVKHRKQHHPG) the composition is skewed to basic residues. The tract at residues 1–25 (MLIPRRVKHRKQHHPGRSGQATGGT) is disordered.

Belongs to the universal ribosomal protein uL16 family. In terms of assembly, part of the 50S ribosomal subunit.

Functionally, binds 23S rRNA and is also seen to make contacts with the A and possibly P site tRNAs. The sequence is that of Large ribosomal subunit protein uL16 from Renibacterium salmoninarum (strain ATCC 33209 / DSM 20767 / JCM 11484 / NBRC 15589 / NCIMB 2235).